The chain runs to 152 residues: Large ribosomal subunit protein uL15 (152 aa).

The protein belongs to the universal ribosomal protein uL15 family. Part of the 50S ribosomal subunit.

Functionally, binds to the 23S rRNA. The polypeptide is Large ribosomal subunit protein uL15 (Staphylothermus marinus (strain ATCC 43588 / DSM 3639 / JCM 9404 / F1)).